The chain runs to 147 residues: uncharacterized protein (147 aa).

The chain crosses the membrane as a helical span at residues Ala3–Ser23.

It to M.leprae ML1147.

Its subcellular location is the membrane. This is an uncharacterized protein from Mycobacterium tuberculosis (strain CDC 1551 / Oshkosh).